We begin with the raw amino-acid sequence, 2517 residues long: Protein capicua homolog (2517 aa).

Disordered regions lie at residues 1–197 (MKPM…SGSY), 300–325 (LSPG…HREP), 342–483 (PWEP…KYKK), 531–579 (EMEG…RGDS), 608–640 (SSRS…FGFR), and 658–767 (VRSR…FRAV). Residues 57–67 (EEAEEGEEEEA) show a composition bias toward acidic residues. Residues 91 to 101 (EDPKGDGEAGR) show a composition bias toward basic and acidic residues. 2 stretches are compositionally biased toward low complexity: residues 158 to 167 (TSTRSSSTDT) and 300 to 313 (LSPG…LPGS). Residues 396–405 (HCEEGEEKHP) show a composition bias toward basic and acidic residues. Pro residues predominate over residues 414 to 428 (LPLPPPQLLSPPPKS). Low complexity predominate over residues 451 to 477 (GSRSSSVASLEKGTAPAARARTPLTAA). Residues 608–619 (SSRSGTPSFSPV) are compositionally biased toward polar residues. Residues 677-686 (DLGPHPPPPA) show a composition bias toward pro residues. Over residues 698–707 (TFQTNLTFTV) the composition is skewed to polar residues. The segment covering 726-735 (GAPGAGGGGA) has biased composition (gly residues). A phosphoserine mark is found at Ser776 and Ser780. Disordered regions lie at residues 812–842 (IVRN…PGRG), 955–1110 (PSQP…DHIR), 1179–1220 (CNKD…APGV), 1235–1274 (SDTK…SLDG), 1290–1347 (SGPA…TSDE), 1379–1539 (RVTD…ILQT), and 1595–1628 (IASK…RVPG). The segment at 937–955 (EPRSVAVFPWHSLVPFLAP) is interaction with ATXN1. A compositionally biased stretch (polar residues) spans 959 to 981 (DPSVQPSEAQQPASHPVASNQSK). A phosphoserine mark is found at Ser1055 and Ser1082. Composition is skewed to basic and acidic residues over residues 1087 to 1110 (PKER…DHIR), 1179 to 1188 (CNKDRKKSSS), and 1200 to 1209 (GHKETRERSM). Residue Arg1099 is modified to Omega-N-methylarginine. The segment at residues 1109–1177 (IRRPMNAFMI…AHFKAHPDWK (69 aa)) is a DNA-binding region (HMG box). Phosphoserine is present on Ser1186. Residues 1235-1245 (SDTKAPGSSSC) are compositionally biased toward polar residues. The residue at position 1271 (Ser1271) is a Phosphoserine. Low complexity predominate over residues 1305–1323 (GAPGPFAAPGEGGALAATG). A phosphoserine mark is found at Ser1340, Ser1345, and Ser1405. Over residues 1418-1430 (PLDPEPPGPPDPP) the composition is skewed to pro residues. Residues 1439–1456 (SAPSSSASSPASSSASAA) are compositionally biased toward low complexity. Residues 1457 to 1474 (TSFSLGSGTFKAQESGQG) show a composition bias toward polar residues. Phosphoserine occurs at positions 1609, 1630, and 1648. Arg1772 carries the post-translational modification Asymmetric dimethylarginine. The disordered stretch occupies residues 1799 to 1818 (QSVPSAPPPKAQSVSPVQAP). An Omega-N-methylarginine modification is found at Arg1843. Disordered regions lie at residues 2039-2064 (AATI…FPSA), 2100-2342 (SFEA…AKCE), and 2430-2517 (AATP…ATGR). The segment covering 2051-2064 (ATATPAPTSPFPSA) has biased composition (low complexity). Composition is skewed to pro residues over residues 2110–2119 (GPAPRQPLEP) and 2136–2145 (PTPPAPPPLP). A compositionally biased stretch (low complexity) spans 2146–2155 (ETWTPTARSS). Lys2177 is modified (N6-acetyllysine). Over residues 2198–2209 (PPTPPSPAPAPA) the composition is skewed to pro residues. Thr2200 carries the phosphothreonine modification. Ser2203 bears the Phosphoserine mark. Residues 2210–2225 (VAPGGSSESSSGRAAG) show a composition bias toward low complexity. Over residues 2249-2278 (KTFDSVDNRVLSEVDFEERFAELPEFRPEE) the composition is skewed to basic and acidic residues. Residues Ser2260, Ser2282, Ser2287, Ser2291, Ser2298, and Ser2306 each carry the phosphoserine modification. Thr2307 carries the post-translational modification Phosphothreonine. Phosphoserine occurs at positions 2311 and 2318. Positions 2457–2469 (APTPSPAGGPDPT) are enriched in pro residues. Residue Ser2504 is modified to Phosphoserine.

Found in a complex with ATXN1 and ATXN1L. In terms of assembly, interacts with ATXN1. As to expression, expressed in fetal brain.

Its subcellular location is the nucleus. Functionally, transcriptional repressor which plays a role in development of the central nervous system (CNS). In concert with ATXN1 and ATXN1L, involved in brain development. In Homo sapiens (Human), this protein is Protein capicua homolog (CIC).